A 559-amino-acid chain; its full sequence is Small ribosomal subunit protein uS3m (559 aa).

A disordered region spans residues 113–134 (EGTEEERNEVRGRGAGKRVESI). A compositionally biased stretch (basic and acidic residues) spans 120-134 (NEVRGRGAGKRVESI).

Belongs to the universal ribosomal protein uS3 family.

It localises to the mitochondrion. The sequence is that of Small ribosomal subunit protein uS3m (RPS3) from Zea mays (Maize).